Reading from the N-terminus, the 28-residue chain is 14-3-3-like protein 4 (28 aa).

The protein belongs to the 14-3-3 family.

This chain is 14-3-3-like protein 4, found in Pseudotsuga menziesii (Douglas-fir).